A 329-amino-acid polypeptide reads, in one-letter code: Probable ABC transporter permease protein MG188 (329 aa).

Transmembrane regions (helical) follow at residues 30-50 (FLLF…PFFL), 96-116 (LISL…IVFV), 128-148 (VFFL…VYIF), 176-196 (ALWA…VLII), 234-254 (LIFL…LALF), and 283-303 (NLAG…GLVL). The ABC transmembrane type-1 domain maps to 88–303 (LRNSFLYSLI…VLGVCYGLVL (216 aa)).

It belongs to the binding-protein-dependent transport system permease family. MalFG subfamily.

Its subcellular location is the cell membrane. In terms of biological role, probably part of a binding-protein-dependent transport system. Probably responsible for the translocation of the substrate across the membrane. This Mycoplasma genitalium (strain ATCC 33530 / DSM 19775 / NCTC 10195 / G37) (Mycoplasmoides genitalium) protein is Probable ABC transporter permease protein MG188.